Here is a 1114-residue protein sequence, read N- to C-terminus: Proto-oncogene tyrosine-protein kinase receptor Ret (1114 aa).

Residues 1–28 (MAKATSGAAGLRLLLLLLLPLLGKVALG) form the signal peptide. A cadherin-like region 1 (CLD1) region spans residues 29–153 (LYFSRDAYWE…RVYFSFFNTS (125 aa)). Over 29-635 (LYFSRDAYWE…QDPLCDELCR (607 aa)) the chain is Extracellular. Residue Asn98 is glycosylated (N-linked (GlcNAc...) asparagine). Cys137 and Cys142 are oxidised to a cystine. N-linked (GlcNAc...) asparagine glycosylation occurs at Asn151. Intrachain disulfides connect Cys157–Cys197 and Cys166–Cys243. Residues 168–272 (PETRPSFRIR…YDEDDSAPTF (105 aa)) form the Cadherin domain. Residues Glu178 and Asn179 each contribute to the Ca(2+) site. An N-linked (GlcNAc...) asparagine glycan is attached at Asn199. Residues Asp230, Glu232, Asp264, Glu265, Asp266, Asp267, Ser268, Asp300, and Asp302 each contribute to the Ca(2+) site. Residues 265–379 (EDDSAPTFPA…MQLAVLVNDS (115 aa)) are cadherin-like region 3 (CLD3). Residues Asn336, Asn343, Asn361, Asn367, and Asn377 are each glycosylated (N-linked (GlcNAc...) asparagine). Asp378 provides a ligand contact to Ca(2+). Asn394 carries N-linked (GlcNAc...) asparagine glycosylation. The cadherin-like region 4 (CLD4) stretch occupies residues 405–506 (PSTYSLSVSR…QAQLLVTVEG (102 aa)). Cys426 and Cys430 are joined by a disulfide. 2 N-linked (GlcNAc...) asparagine glycosylation sites follow: Asn448 and Asn468. 4 disulfides stabilise this stretch: Cys449–Cys478, Cys515–Cys531, Cys519–Cys541, and Cys528–Cys558. Residue Asn554 is glycosylated (N-linked (GlcNAc...) asparagine). The Ca(2+) site is built by Thr564, Cys565, Asp567, His569, Glu574, and Asp584. 5 disulfide bridges follow: Cys565-Cys581, Cys570-Cys585, Cys609-Cys620, Cys611-Cys618, and Cys630-Cys634. The helical transmembrane segment at 636-657 (TVIAAAVLFSFIVSVLLSAFCI) threads the bilayer. Topologically, residues 658-1114 (HCYHKFAHKP…AAKLMDTFDS (457 aa)) are cytoplasmic. Residue Tyr687 is modified to Phosphotyrosine; by autocatalysis. Residue Ser688 is glycosylated (O-linked (GlcNAc) serine). Ser696 carries the phosphoserine modification. Positions 724–1016 (LVLGKTLGEG…KMMVKRRDYL (293 aa)) constitute a Protein kinase domain. Residues 730 to 738 (LGEGEFGKV) and Lys758 each bind ATP. 805 to 807 (EYA) serves as a coordination point for semaxanib. 3 positions are modified to phosphotyrosine; by autocatalysis: Tyr806, Tyr809, and Tyr826. The active-site Proton acceptor is Asp874. Phosphotyrosine; by autocatalysis occurs at positions 900, 905, 981, 1015, 1029, 1062, 1090, and 1096.

The protein belongs to the protein kinase superfamily. Tyr protein kinase family. Phosphorylated form interacts with the PBT domain of DOK2, DOK4 and DOK5. The phosphorylated form interacts with PLCG1 and GRB7. Interacts (not phosphorylated) with PTK2/FAK1 (via FERM domain). Extracellular cell-membrane anchored RET cadherin fragments form complex in neurons with reduced trophic status, preferentially at the contact sites between somas. Interacts with AIP in the pituitary gland; this interaction prevents the formation of the AIP-survivin complex. Interacts (inactive) with CBLC and CD2AP; dissociates upon activation by GDNF which increases CBLC:CD2AP interaction. Ca(2+) is required as a cofactor. Autophosphorylated on C-terminal tyrosine residues upon ligand stimulation. Post-translationally, proteolytically cleaved by caspase-3. The soluble RET kinase fragment is able to induce cell death. The extracellular cell-membrane anchored RET cadherin fragment accelerates cell adhesion in sympathetic neurons.

The protein resides in the cell membrane. The protein localises to the endosome membrane. The enzyme catalyses L-tyrosyl-[protein] + ATP = O-phospho-L-tyrosyl-[protein] + ADP + H(+). Repressed by 4-(3-hydroxyanilino)-quinolines derivatives, indolin-2-one-derivatives, 2-(alkylsulfanyl)-4-(3-thienyl) nicotinonitrile analogs, 3- and 4-substituted beta-carbolin-1-ones, vandetanib, motesanib, sorafenib (BAY 43-9006), cabozantinib (XL184), lenvatinib, sunitinib, nintedanib, and withaferin A (WA). Inactivation by sorafenib both reduces kinase activity and promotes lysosomal degradation. Receptor tyrosine-protein kinase involved in numerous cellular mechanisms including cell proliferation, neuronal navigation, cell migration, and cell differentiation in response to glia cell line-derived growth family factors (GDNF, NRTN, ARTN, PSPN and GDF15). In contrast to most receptor tyrosine kinases, RET requires not only its cognate ligands but also coreceptors, for activation. GDNF ligands (GDNF, NRTN, ARTN, PSPN and GDF15) first bind their corresponding GDNFR coreceptors (GFRA1, GFRA2, GFRA3, GFRA4 and GFRAL, respectively), triggering RET autophosphorylation and activation, leading to activation of downstream signaling pathways, including the MAPK- and AKT-signaling pathways. Acts as a dependence receptor via the GDNF-GFRA1 signaling: in the presence of the ligand GDNF in somatotrophs within pituitary, promotes survival and down regulates growth hormone (GH) production, but triggers apoptosis in absence of GDNF. Required for the molecular mechanisms orchestration during intestine organogenesis via the ARTN-GFRA3 signaling: involved in the development of enteric nervous system and renal organogenesis during embryonic life, and promotes the formation of Peyer's patch-like structures, a major component of the gut-associated lymphoid tissue. Mediates, through interaction with GDF15-receptor GFRAL, GDF15-induced cell-signaling in the brainstem which triggers an aversive response, characterized by nausea, vomiting, and/or loss of appetite in response to various stresses. Modulates cell adhesion via its cleavage by caspase in sympathetic neurons and mediates cell migration in an integrin (e.g. ITGB1 and ITGB3)-dependent manner. Also active in the absence of ligand, triggering apoptosis through a mechanism that requires receptor intracellular caspase cleavage. Triggers the differentiation of rapidly adapting (RA) mechanoreceptors. Involved in the development of the neural crest. Regulates nociceptor survival and size. Phosphorylates PTK2/FAK1. In terms of biological role, isoform 1 in complex with GFRAL induces higher activation of MAPK-signaling pathway than isoform 2 in complex with GFRAL. In Homo sapiens (Human), this protein is Proto-oncogene tyrosine-protein kinase receptor Ret.